The chain runs to 227 residues: Venom allergen 5.01 (227 aa).

Residues 1-23 (MEIGGLVYLILIITIINLSFGET) form the signal peptide. Cystine bridges form between Cys27–Cys39, Cys31–Cys124, Cys49–Cys117, and Cys193–Cys210. The region spanning 68-212 (LKRHNDFRQN…WYTHYLVCNY (145 aa)) is the SCP domain.

This sequence belongs to the CRISP family. Venom allergen 5-like subfamily. Expressed by the venom gland.

It is found in the secreted. In Dolichovespula maculata (Bald-faced hornet), this protein is Venom allergen 5.01.